The following is a 226-amino-acid chain: Lysoplasmalogenase TMEM86B (226 aa).

Residues 1–23 lie on the Cytoplasmic side of the membrane; sequence MDPGKEGLPRKPRFSAQQLHVGK. Residues 24-40 traverse the membrane as a helical segment; it reads WLSPFFFTCAVYFLLWI. At 41 to 46 the chain is on the extracellular side; sequence PDDQPS. A helical membrane pass occupies residues 47-64; sequence WVGALVKCLPVLSLVVFL. The Cytoplasmic segment spans residues 65–76; sequence RAVDAGGGYSAR. A helical transmembrane segment spans residues 77–93; it reads LQGALLCSAVGDACLVW. Over 94-99 the chain is Extracellular; the sequence is PEAFLH. Residues 100-117 form a helical membrane-spanning segment; sequence GVAAFAAAHLLYLWAFGL. At 118–123 the chain is on the cytoplasmic side; sequence TPLQPG. The chain crosses the membrane as a helical span at residues 124–140; it reads LLLLVILAALPYYGLLL. The Extracellular portion of the chain corresponds to 141–146; that stretch reads WHLPPD. The helical transmembrane segment at 147-163 threads the bilayer; the sequence is LVLALTAYSLALATMLW. At 164-171 the chain is on the cytoplasmic side; sequence RGLARGGS. A helical transmembrane segment spans residues 172 to 188; the sequence is TGWGALLFTLSDTTLAW. The Extracellular portion of the chain corresponds to 189–199; the sequence is NAFAQPLPHAR. A helical membrane pass occupies residues 200-217; the sequence is LVVMTTYYSAQVLISLSV. Residues 218 to 226 lie on the Cytoplasmic side of the membrane; the sequence is SQSPKLKPN.

It belongs to the TMEM86 family. Homodimer.

The protein resides in the endoplasmic reticulum membrane. It localises to the cytoplasm. The enzyme catalyses a 1-O-(1Z-alkenyl)-sn-glycero-3-phosphocholine + H2O = a 2,3-saturated aldehyde + sn-glycerol 3-phosphocholine. The catalysed reaction is a 1-O-(1Z-alkenyl)-sn-glycero-3-phosphoethanolamine + H2O = a 2,3-saturated aldehyde + sn-glycero-3-phosphoethanolamine. With respect to regulation, competitively inhibited by lysophosphatidic acid. Catalyzes the hydrolysis of the vinyl ether bond of choline or ethanolamine lysoplasmalogens, forming fatty aldehyde and glycerophosphocholine or glycerophosphoethanolamine, respectively and is specific for the sn-2-deacylated (lyso) form of plasmalogen. This is Lysoplasmalogenase TMEM86B (TMEM86B) from Sus scrofa (Pig).